We begin with the raw amino-acid sequence, 4363 residues long: AM-toxin synthetase AMT1 (4363 aa).

Positions 278 to 670 (AGQAKQRPHA…GSLLYVGRKD (393 aa)) are adenylation 1. The Carrier 1 domain maps to 810–887 (APDSVIARQL…ALAAIAKVIP (78 aa)). Ser847 is subject to O-(pantetheine 4'-phosphoryl)serine. The condensation 1 stretch occupies residues 926–1340 (EDVYACTPLQ…TLGQIDVLTS (415 aa)). An adenylation 2 region spans residues 1368–1765 (KQARTRPGAI…LGRKDTQIKI (398 aa)). The region spanning 1884-1961 (PPVTDMEKHV…DQARHVTLLT (78 aa)) is the Carrier 2 domain. Ser1922 carries the post-translational modification O-(pantetheine 4'-phosphoryl)serine. The tract at residues 1999–2410 (EDVYPCTPLQ…ASPSSSTLVS (412 aa)) is condensation 2. The tract at residues 2448 to 2853 (RKKALAAPQA…GRKDNQVKIR (406 aa)) is adenylation 3. The 77-residue stretch at 2977 to 3053 (LPSTVMEETL…DLAACCTDRR (77 aa)) folds into the Carrier 3 domain. Residue Ser3014 is modified to O-(pantetheine 4'-phosphoryl)serine. The segment at 3098–3503 (VEDVYPCTPM…ELVSSIETLN (406 aa)) is condensation 3. Residues 3730–3806 (PAVTAMQLAI…SLAVRATENT (77 aa)) enclose the Carrier 4 domain. An O-(pantetheine 4'-phosphoryl)serine modification is found at Ser3767. Residues 3850 to 4204 (QDVLPCTSMQ…GLDEIVEHYA (355 aa)) form a condensation 4 region.

This sequence belongs to the NRP synthetase family.

It functions in the pathway mycotoxin biosynthesis. Its function is as follows. Nonribosomal peptide synthetase; part of the gene clusters that mediate the biosynthesis of AM-toxins, host-selective toxins (HSTs) causing Alternaria blotch on apple, a worldwide distributed disease. AM-toxins are cyclic depsipeptides containing the 3 residues 2-hydroxy-isovaleric acid (2-HIV), dehydroalanine, L-alanine which are common for all 3 AM-toxins I to III. The fourth precursor is L-alpha-amino-methoxyphenyl-valeric acid (L-Amv) for AM-toxin I, L-alpha-amino-phenyl-valeric acid (L-Apv) for AM-toxin II, and L-alpha-amino-hydroxyphenyl-valeric acid (L-Ahv) for AM-toxin III. AM-toxins have two target sites for affecting susceptible apple cells; they cause invagination of the plasma membrane and electrolyte loss, and chloroplast disorganization. The non-ribosomal peptide synthetase AMT1 contains 4 catalytic modules and is responsible for activation of each residue in AM-toxin. The aldo-keto reductase AMT2 catalyzes the conversion of 2-keto-isovaleric acid (2-KIV) to 2-hydroxy-isovaleric acid (2-HIV), one of the precursor residues incorporated by AMT1 during AM-toxin biosynthesis, by reduction of its ketone to an alcohol. The cytochrome P450 monooxygenase AMT3 and the thioesterase AMT4 are also important for AM-toxin production, but their exact function within the AM-toxin biosynthesis are not known yet. Up to 21 proteins (including AMT1 to AMT4) are predicted to be involved in AM-toxin biosynthesis since their expression ishighly up-regulated in AM-toxin-producing cultures. This chain is AM-toxin synthetase AMT1, found in Alternaria alternata (Alternaria rot fungus).